Here is a 138-residue protein sequence, read N- to C-terminus: DNA-directed RNA polymerase subunit omega (138 aa).

Residues Ala101–Asp138 form a disordered region. The segment covering Asp119–Asp138 has biased composition (acidic residues).

The protein belongs to the RNA polymerase subunit omega family. As to quaternary structure, the RNAP catalytic core consists of 2 alpha, 1 beta, 1 beta' and 1 omega subunit. When a sigma factor is associated with the core the holoenzyme is formed, which can initiate transcription.

The enzyme catalyses RNA(n) + a ribonucleoside 5'-triphosphate = RNA(n+1) + diphosphate. Its function is as follows. Promotes RNA polymerase assembly. Latches the N- and C-terminal regions of the beta' subunit thereby facilitating its interaction with the beta and alpha subunits. In Rhodospirillum rubrum (strain ATCC 11170 / ATH 1.1.1 / DSM 467 / LMG 4362 / NCIMB 8255 / S1), this protein is DNA-directed RNA polymerase subunit omega.